Here is a 253-residue protein sequence, read N- to C-terminus: Imidazole glycerol phosphate synthase subunit HisF (253 aa).

Catalysis depends on residues aspartate 11 and aspartate 130.

Belongs to the HisA/HisF family. In terms of assembly, heterodimer of HisH and HisF.

It localises to the cytoplasm. It catalyses the reaction 5-[(5-phospho-1-deoxy-D-ribulos-1-ylimino)methylamino]-1-(5-phospho-beta-D-ribosyl)imidazole-4-carboxamide + L-glutamine = D-erythro-1-(imidazol-4-yl)glycerol 3-phosphate + 5-amino-1-(5-phospho-beta-D-ribosyl)imidazole-4-carboxamide + L-glutamate + H(+). The protein operates within amino-acid biosynthesis; L-histidine biosynthesis; L-histidine from 5-phospho-alpha-D-ribose 1-diphosphate: step 5/9. Functionally, IGPS catalyzes the conversion of PRFAR and glutamine to IGP, AICAR and glutamate. The HisF subunit catalyzes the cyclization activity that produces IGP and AICAR from PRFAR using the ammonia provided by the HisH subunit. The polypeptide is Imidazole glycerol phosphate synthase subunit HisF (Desulfitobacterium hafniense (strain DSM 10664 / DCB-2)).